Reading from the N-terminus, the 338-residue chain is tRNA dimethylallyltransferase (338 aa).

13–20 (GPTASGKT) provides a ligand contact to ATP. 15 to 20 (TASGKT) lines the substrate pocket. Interaction with substrate tRNA regions lie at residues 38–41 (DSTL) and 162–166 (QRVSR).

It belongs to the IPP transferase family. In terms of assembly, monomer. Mg(2+) is required as a cofactor.

It catalyses the reaction adenosine(37) in tRNA + dimethylallyl diphosphate = N(6)-dimethylallyladenosine(37) in tRNA + diphosphate. Catalyzes the transfer of a dimethylallyl group onto the adenine at position 37 in tRNAs that read codons beginning with uridine, leading to the formation of N6-(dimethylallyl)adenosine (i(6)A). The polypeptide is tRNA dimethylallyltransferase (Cellvibrio japonicus (strain Ueda107) (Pseudomonas fluorescens subsp. cellulosa)).